A 196-amino-acid polypeptide reads, in one-letter code: Large ribosomal subunit protein eL15 (196 aa).

The tract at residues 159–196 is disordered; that stretch reads RAYRGRTSAGQRGRGQQKRGKGTEHTRPSIRANDKRGK. Residues 179 to 196 are compositionally biased toward basic and acidic residues; that stretch reads KGTEHTRPSIRANDKRGK.

This sequence belongs to the eukaryotic ribosomal protein eL15 family.

In Natronomonas pharaonis (strain ATCC 35678 / DSM 2160 / CIP 103997 / JCM 8858 / NBRC 14720 / NCIMB 2260 / Gabara) (Halobacterium pharaonis), this protein is Large ribosomal subunit protein eL15.